Reading from the N-terminus, the 124-residue chain is Small ribosomal subunit protein uS12 (124 aa).

The segment at 9 to 28 (RTERQTLSRKTKSPALRSCP) is disordered. 3-methylthioaspartic acid is present on aspartate 89. Positions 104–124 (TAGVKDRRQSRSKYGAKAPKE) are disordered.

It belongs to the universal ribosomal protein uS12 family. As to quaternary structure, part of the 30S ribosomal subunit. Contacts proteins S8 and S17. May interact with IF1 in the 30S initiation complex.

In terms of biological role, with S4 and S5 plays an important role in translational accuracy. Its function is as follows. Interacts with and stabilizes bases of the 16S rRNA that are involved in tRNA selection in the A site and with the mRNA backbone. Located at the interface of the 30S and 50S subunits, it traverses the body of the 30S subunit contacting proteins on the other side and probably holding the rRNA structure together. The combined cluster of proteins S8, S12 and S17 appears to hold together the shoulder and platform of the 30S subunit. This is Small ribosomal subunit protein uS12 from Synechococcus sp. (strain RCC307).